A 284-amino-acid chain; its full sequence is Tropomyosin (284 aa).

The stretch at 1–284 (MDAIKKKMLM…DQALNELHNM (284 aa)) forms a coiled coil. Disordered stretches follow at residues 106-134 (LNST…ENRQ) and 186-221 (AETK…EEAY). Composition is skewed to basic and acidic residues over residues 112–134 (KLTD…ENRQ) and 186–198 (AETK…DELK).

This sequence belongs to the tropomyosin family. Homodimer.

Functionally, tropomyosin, in association with the troponin complex, plays a central role in the calcium dependent regulation of muscle contraction. The chain is Tropomyosin (TPM) from Branchiostoma belcheri (Amphioxus).